The primary structure comprises 315 residues: Olfactory receptor 3A3 (315 aa).

Residues 1 to 28 (MESEAGTNRTAVAEFMLLGLVQTEEMQS) lie on the Extracellular side of the membrane. Residue Asn8 is glycosylated (N-linked (GlcNAc...) asparagine). Residues 29 to 52 (VIFVLLLFAYLVTTGGNLSILAAI) form a helical membrane-spanning segment. Residues 53–60 (LVEPKLHT) are Cytoplasmic-facing. A helical membrane pass occupies residues 61-82 (PMYFFLGNLSVLDVGCITVTVP). Residues 83-103 (AMLGRLLSHKSTISYDACLSQ) lie on the Extracellular side of the membrane. Residues Cys100 and Cys192 are joined by a disulfide bond. Residues 104-123 (LFFFHLLAGMDCFLLTAMAY) form a helical membrane-spanning segment. Residues 124 to 143 (DRFLAICRPLTYSTHMNQRV) are Cytoplasmic-facing. Residues 144-161 (QRMLVAVSWTCAFTNALT) traverse the membrane as a helical segment. The Extracellular segment spans residues 162–199 (HTIALTTLNFCGPSVINHFYCDLPQLFQLSCSSTQLNE). The chain crosses the membrane as a helical span at residues 200–222 (LLLFVAAAVMAVAPLVFISVSYA). At 223–239 (HVVAAVLQIHSAEGRKK) the chain is on the cytoplasmic side. The chain crosses the membrane as a helical span at residues 240–262 (AFSTCGSHLTVVGIFYGTGVFSY). Residues 263–275 (MRLGSVESSDKDK) are Extracellular-facing. Residues 276–295 (GVGVFMTVINPMLNPLIYSL) form a helical membrane-spanning segment. The Cytoplasmic segment spans residues 296 to 315 (RNTDVQGALCQLLVVKRSLT).

This sequence belongs to the G-protein coupled receptor 1 family.

The protein localises to the cell membrane. Its function is as follows. Odorant receptor. This chain is Olfactory receptor 3A3 (OR3A3), found in Pan troglodytes (Chimpanzee).